Here is a 284-residue protein sequence, read N- to C-terminus: 4-diphosphocytidyl-2-C-methyl-D-erythritol kinase (284 aa).

Residue lysine 14 is part of the active site. 98 to 108 lines the ATP pocket; the sequence is PMGGGLGGGSS. Aspartate 140 is an active-site residue.

This sequence belongs to the GHMP kinase family. IspE subfamily.

The enzyme catalyses 4-CDP-2-C-methyl-D-erythritol + ATP = 4-CDP-2-C-methyl-D-erythritol 2-phosphate + ADP + H(+). It functions in the pathway isoprenoid biosynthesis; isopentenyl diphosphate biosynthesis via DXP pathway; isopentenyl diphosphate from 1-deoxy-D-xylulose 5-phosphate: step 3/6. Catalyzes the phosphorylation of the position 2 hydroxy group of 4-diphosphocytidyl-2C-methyl-D-erythritol. The sequence is that of 4-diphosphocytidyl-2-C-methyl-D-erythritol kinase from Shewanella baltica (strain OS195).